A 275-amino-acid chain; its full sequence is 2,3,4,5-tetrahydropyridine-2,6-dicarboxylate N-succinyltransferase (275 aa).

Residues arginine 107 and aspartate 144 each coordinate substrate.

It belongs to the transferase hexapeptide repeat family. As to quaternary structure, homotrimer.

The protein localises to the cytoplasm. It carries out the reaction (S)-2,3,4,5-tetrahydrodipicolinate + succinyl-CoA + H2O = (S)-2-succinylamino-6-oxoheptanedioate + CoA. Its pathway is amino-acid biosynthesis; L-lysine biosynthesis via DAP pathway; LL-2,6-diaminopimelate from (S)-tetrahydrodipicolinate (succinylase route): step 1/3. This chain is 2,3,4,5-tetrahydropyridine-2,6-dicarboxylate N-succinyltransferase, found in Polynucleobacter asymbioticus (strain DSM 18221 / CIP 109841 / QLW-P1DMWA-1) (Polynucleobacter necessarius subsp. asymbioticus).